The sequence spans 581 residues: Proline--tRNA ligase 1 (581 aa).

This sequence belongs to the class-II aminoacyl-tRNA synthetase family. ProS type 1 subfamily. In terms of assembly, homodimer.

It localises to the cytoplasm. It catalyses the reaction tRNA(Pro) + L-proline + ATP = L-prolyl-tRNA(Pro) + AMP + diphosphate. Functionally, catalyzes the attachment of proline to tRNA(Pro) in a two-step reaction: proline is first activated by ATP to form Pro-AMP and then transferred to the acceptor end of tRNA(Pro). As ProRS can inadvertently accommodate and process non-cognate amino acids such as alanine and cysteine, to avoid such errors it has two additional distinct editing activities against alanine. One activity is designated as 'pretransfer' editing and involves the tRNA(Pro)-independent hydrolysis of activated Ala-AMP. The other activity is designated 'posttransfer' editing and involves deacylation of mischarged Ala-tRNA(Pro). The misacylated Cys-tRNA(Pro) is not edited by ProRS. In Rhodococcus jostii (strain RHA1), this protein is Proline--tRNA ligase 1.